The chain runs to 88 residues: Putative membrane protein insertion efficiency factor (88 aa).

The interval 68-88 (VPPPNSDTRARGEADARSHRL) is disordered. Over residues 75–88 (TRARGEADARSHRL) the composition is skewed to basic and acidic residues.

Belongs to the UPF0161 family.

It is found in the cell inner membrane. Functionally, could be involved in insertion of integral membrane proteins into the membrane. The sequence is that of Putative membrane protein insertion efficiency factor from Burkholderia cenocepacia (strain ATCC BAA-245 / DSM 16553 / LMG 16656 / NCTC 13227 / J2315 / CF5610) (Burkholderia cepacia (strain J2315)).